Consider the following 308-residue polypeptide: Aspartate carbamoyltransferase catalytic subunit (308 aa).

Residues arginine 57 and threonine 58 each contribute to the carbamoyl phosphate site. Lysine 86 is a binding site for L-aspartate. Positions 107, 135, and 138 each coordinate carbamoyl phosphate. Arginine 168 and arginine 228 together coordinate L-aspartate. Positions 267 and 268 each coordinate carbamoyl phosphate.

Belongs to the aspartate/ornithine carbamoyltransferase superfamily. ATCase family. Heterododecamer (2C3:3R2) of six catalytic PyrB chains organized as two trimers (C3), and six regulatory PyrI chains organized as three dimers (R2).

The enzyme catalyses carbamoyl phosphate + L-aspartate = N-carbamoyl-L-aspartate + phosphate + H(+). The protein operates within pyrimidine metabolism; UMP biosynthesis via de novo pathway; (S)-dihydroorotate from bicarbonate: step 2/3. Functionally, catalyzes the condensation of carbamoyl phosphate and aspartate to form carbamoyl aspartate and inorganic phosphate, the committed step in the de novo pyrimidine nucleotide biosynthesis pathway. The chain is Aspartate carbamoyltransferase catalytic subunit from Leptospira interrogans serogroup Icterohaemorrhagiae serovar Lai (strain 56601).